The following is a 358-amino-acid chain: F-box protein At4g35733 (358 aa).

The region spanning 4–51 is the F-box domain; it reads ATVWSDLPGELLDHIANGLFSKVELLRFRSICKTFRSAVDSDKNFLDH.

As to quaternary structure, part of a SCF (ASK-cullin-F-box) protein ligase complex.

The protein operates within protein modification; protein ubiquitination. Its function is as follows. Component of SCF(ASK-cullin-F-box) E3 ubiquitin ligase complexes, which may mediate the ubiquitination and subsequent proteasomal degradation of target proteins. The chain is F-box protein At4g35733 from Arabidopsis thaliana (Mouse-ear cress).